A 180-amino-acid polypeptide reads, in one-letter code: Cytochrome b6-f complex iron-sulfur subunit 2 (180 aa).

The chain crosses the membrane as a helical span at residues 21–43; sequence LLTFGTITGVAAGALYPAVKYLI. Residues 66 to 162 enclose the Rieske domain; it reads VTEFLASHNA…ATVTDDDKLV (97 aa). Positions 108, 110, 126, and 129 each coordinate [2Fe-2S] cluster. Cysteine 113 and cysteine 128 are disulfide-bonded.

This sequence belongs to the Rieske iron-sulfur protein family. The 4 large subunits of the cytochrome b6-f complex are cytochrome b6, subunit IV (17 kDa polypeptide, PetD), cytochrome f and the Rieske protein, while the 4 small subunits are PetG, PetL, PetM and PetN. The complex functions as a dimer. The cofactor is [2Fe-2S] cluster.

It is found in the cellular thylakoid membrane. The catalysed reaction is 2 oxidized [plastocyanin] + a plastoquinol + 2 H(+)(in) = 2 reduced [plastocyanin] + a plastoquinone + 4 H(+)(out). Its function is as follows. Component of the cytochrome b6-f complex, which mediates electron transfer between photosystem II (PSII) and photosystem I (PSI), cyclic electron flow around PSI, and state transitions. This Synechocystis sp. (strain ATCC 27184 / PCC 6803 / Kazusa) protein is Cytochrome b6-f complex iron-sulfur subunit 2.